The sequence spans 240 residues: MVCQARFGVKNASRGHRMERPQTVKGKIMAVEFGDSQRSLSDTLTGMIASIRGNTITLRELMIEIGEQGFLLLCALLTLPFLIPVSIPGVSTVFGAAIILISLAITLNRMPWLPKRILDREIATEKLVPTLRKGAALVSKLDRYVRPRLNFLTEGALMNRFNGLMIMAGGVLLMFPLGLIPLSNTLPGIAILLLSLGIIQRDGLMVAGGYFFLVATTVYFAVLGYAAFAAGQGLSHFFVS.

The next 3 membrane-spanning stretches (helical) occupy residues 60-80 (ELMI…LTLP), 81-101 (FLIP…IILI), and 203-223 (GLMV…FAVL).

This sequence to Synechocystis PCC 6803 slr1875.

Its subcellular location is the cell membrane. In terms of biological role, required for nodule invasion. Mutations in this gene lead to sensitivity to alkaline conditions which prevents nodule invasion. The polypeptide is Protein ExoD (exoD) (Rhizobium meliloti (strain 1021) (Ensifer meliloti)).